The following is a 112-amino-acid chain: Putative regulatory protein DP2861 (112 aa).

The protein belongs to the RemA family.

The polypeptide is Putative regulatory protein DP2861 (Desulfotalea psychrophila (strain LSv54 / DSM 12343)).